A 1091-amino-acid polypeptide reads, in one-letter code: MKLLYTDIRTSLTEILTREAEELVAAGKRVFYIAPNSLSFEKERAVLECLSQQASFSITVTRFAQMARYLVLNDLPAKTTLDDIGLGLAFYKCLAELDPKDLRVYGAIKQDPQLIQQLIELYHEMTKSQMSFLDLENLTDEDKRADLLLIFEKVTAYLNQGQLAQGSQLSHLIEAIENDKVSSDFNQITLVIDGFTRFSAEEERVVDLLHGKGVEIVIGAYASKKAYTSPFSEGNLYQASVKFLHHLASKYQTPAQDCSQTHEKMDSFDKASRLLESSYDFSELALDVDEKDRENLQIWSCLTQKEELELVARSIRQKLHENSDLSYKHFRILLGDVASYQLSLKTIFDQYQIPFYLGRSEAMAHHPLTQFVESILALKRYRFRQEDLINLLRTDLYTDLSQSDIDAFEQYIRYLGINGLPAFQQIFTKSHHGKFNLERLNVLRLRILAPLETLFASRKQKAENLLQKWSVFLKEGAVTKQLQDLTTTLEAVEQERQAEVWKAFCHVLEQFATVFAGSQVSLEDFLALLHSGMSLSQYRTIPATVDTVLVQSYDLIAPLTADFVYAIGLTQDNLPKISQNTSLLTDEERQNLNQATEEGVQLLIASSENLKKNRYTMLSLVNSARKQLFLSAPSLFNESESKESAYLQELIHFGFRRREKRMNHKGLSKEDMGSYHSLLSSLVAYHQQGEMSDTEQDLTFVKVLSRVIGKKLDLQGLENPAIPTSPSSKTLAKDTLQALYPAKQEFYLSTSGLTEFYRNEYSYFLRYVLGLQEELRLRPDARSHGNFLHRIFERALQLPNEDSFDQRLEQAIQETSQEREFEAIYQESLEAQFTKEVLLDVARTTGHILRHNPAIETIKEEANFGGKDQAFIQLDNGRSVFVRGKVDRIDRLKANGAIGVVDYKSSLTQFQFPHFFNGLNSQLPTYLAALKREGKQNFFGAMYLEMAEPVQSLMAVKSLAGAVVEASKSMKYQGLFLEKESSYLGEFYNKNKANQLTDEEFQLLLDYNAYLYKKAAEKILAGRFAINPYTENGRSIAPYVQQHQAITGFEANYHLGQARFLKKLDLADGKRLVGEKLKQAWFEKIREELNR.

The protein belongs to the helicase family. AddB/RexB type 2 subfamily. Heterodimer of AddA and RexB. Mg(2+) is required as a cofactor.

In terms of biological role, the heterodimer acts as both an ATP-dependent DNA helicase and an ATP-dependent, dual-direction single-stranded exonuclease. Recognizes the chi site generating a DNA molecule suitable for the initiation of homologous recombination. This subunit has 5' -&gt; 3' nuclease activity but not helicase activity. This chain is ATP-dependent helicase/deoxyribonuclease subunit B, found in Streptococcus pneumoniae (strain ATCC 700669 / Spain 23F-1).